Reading from the N-terminus, the 126-residue chain is Large ribosomal subunit protein bL12 (126 aa).

Belongs to the bacterial ribosomal protein bL12 family. Homodimer. Part of the ribosomal stalk of the 50S ribosomal subunit. Forms a multimeric L10(L12)X complex, where L10 forms an elongated spine to which 2 to 4 L12 dimers bind in a sequential fashion. Binds GTP-bound translation factors.

Forms part of the ribosomal stalk which helps the ribosome interact with GTP-bound translation factors. Is thus essential for accurate translation. This chain is Large ribosomal subunit protein bL12, found in Bordetella avium (strain 197N).